The following is a 162-amino-acid chain: Protein NrdI (162 aa).

Belongs to the NrdI family.

In terms of biological role, probably involved in ribonucleotide reductase function. The protein is Protein NrdI of Streptococcus pyogenes serotype M28 (strain MGAS6180).